The chain runs to 206 residues: Twist-related protein 1 (206 aa).

Over residues 1–18 (MMQDVSSSPVSPADDSLS) the composition is skewed to low complexity. The interval 1–109 (MMQDVSSSPV…GGGSPQSYEE (109 aa)) is disordered. Over residues 34–43 (RGARKRRSSR) the composition is skewed to basic residues. 2 stretches are compositionally biased toward gly residues: residues 48-65 (GSAGPGGATGGGIGGGDE) and 78-103 (SAGGGGGGGAGGGGGGGGGSSSGGGS). Positions 112–163 (TQRVMANVRERQRTQSLNEAFAALRKIIPTLPSDKLSKIQTLKLAARYIDFL) constitute a bHLH domain. The tract at residues 165 to 195 (QVLQSDELDSKMASCSYVAHERLSYAFSVWR) is sufficient for transactivation activity.

Efficient DNA binding requires dimerization with another bHLH protein. Homodimer or heterodimer with E proteins such as TCF3. ID1 binds preferentially to TCF3 but does not interact efficiently with TWIST1 so ID1 levels control the amount of TCF3 available to dimerize with TWIST1 and thus determine the type of dimer formed. Subset of mesodermal cells.

Its subcellular location is the nucleus. Functionally, acts as a transcriptional regulator. Inhibits myogenesis by sequestrating E proteins, inhibiting trans-activation by MEF2, and inhibiting DNA-binding by MYOD1 through physical interaction. This interaction probably involves the basic domains of both proteins. Also represses expression of pro-inflammatory cytokines such as TNFA and IL1B. Regulates cranial suture patterning and fusion. Activates transcription as a heterodimer with E proteins. Regulates gene expression differentially, depending on dimer composition. Homodimers induce expression of FGFR2 and POSTN while heterodimers repress FGFR2 and POSTN expression and induce THBS1 expression. Heterodimerization is also required for osteoblast differentiation. Represses the activity of the circadian transcriptional activator: NPAS2-BMAL1 heterodimer. In Mus musculus (Mouse), this protein is Twist-related protein 1 (Twist1).